An 827-amino-acid chain; its full sequence is Multiphosphoryl transfer protein (827 aa).

The PTS EIIA type-2 domain occupies 2-142; the sequence is IPLTSELVAI…AVIVARLTGA (141 aa). The active-site Tele-phosphohistidine intermediate; for EIIA activity is the His-62. Residue His-62 is modified to Phosphohistidine; by HPr. One can recognise an HPr domain in the interval 157-245; it reads AQGIDVVVTG…AFEAGLEDEE (89 aa). The active-site Pros-phosphohistidine intermediate; for HPr activity is His-171. Phosphohistidine; by EI is present on His-171. A PTS EI region spans residues 270 to 827; that stretch reads EGRTLVGISS…TTAAEVRGLK (558 aa). His-457 functions as the Tele-phosphohistidine intermediate; for PTS EI activity in the catalytic mechanism. A Phosphohistidine; by autocatalysis modification is found at His-457. Phosphoenolpyruvate contacts are provided by Arg-564 and Arg-600. Mg(2+) is bound by residues Glu-693 and Asp-717. Residues 716–717 and Arg-727 each bind phosphoenolpyruvate; that span reads ND. Cys-764 (proton donor) is an active-site residue.

The protein belongs to the PEP-utilizing enzyme family. Requires Mg(2+) as cofactor.

The protein resides in the cytoplasm. It catalyses the reaction L-histidyl-[protein] + phosphoenolpyruvate = N(pros)-phospho-L-histidyl-[protein] + pyruvate. Its function is as follows. The phosphoenolpyruvate-dependent sugar phosphotransferase system (sugar PTS), a major carbohydrate active transport system, catalyzes the phosphorylation of incoming sugar substrates concomitantly with their translocation across the cell membrane. The enzyme II FruAB PTS system is involved in fructose transport. This Rhodobacter capsulatus (Rhodopseudomonas capsulata) protein is Multiphosphoryl transfer protein.